A 206-amino-acid polypeptide reads, in one-letter code: ATP-dependent dethiobiotin synthetase BioD (206 aa).

12–17 provides a ligand contact to ATP; the sequence is DSGKTL. Mg(2+) is bound at residue Thr-16. Lys-32 is an active-site residue. Residue Glu-99 coordinates Mg(2+). Residue 99–102 coordinates ATP; the sequence is EGAG.

It belongs to the dethiobiotin synthetase family. Homodimer. The cofactor is Mg(2+).

The protein resides in the cytoplasm. It carries out the reaction (7R,8S)-7,8-diammoniononanoate + CO2 + ATP = (4R,5S)-dethiobiotin + ADP + phosphate + 3 H(+). Its pathway is cofactor biosynthesis; biotin biosynthesis; biotin from 7,8-diaminononanoate: step 1/2. Functionally, catalyzes a mechanistically unusual reaction, the ATP-dependent insertion of CO2 between the N7 and N8 nitrogen atoms of 7,8-diaminopelargonic acid (DAPA, also called 7,8-diammoniononanoate) to form a ureido ring. The protein is ATP-dependent dethiobiotin synthetase BioD of Cytophaga hutchinsonii (strain ATCC 33406 / DSM 1761 / CIP 103989 / NBRC 15051 / NCIMB 9469 / D465).